A 472-amino-acid polypeptide reads, in one-letter code: Spliceosome-associated protein CWC27 homolog (472 aa).

Ser2 carries the N-acetylserine modification. In terms of domain architecture, PPIase cyclophilin-type spans 11–166; that stretch reads TNGKVLLKTT…NPHKIKSCEV (156 aa). N-linked (GlcNAc...) asparagine glycosylation is found at Asn109 and Asn201. The stretch at 206 to 230 forms a coiled coil; it reads SFGEEAEEEEEEVNRVSQSMKGKSK. Disordered regions lie at residues 206-386 and 398-472; these read SFGE…DQTL and QAIA…KERR. A compositionally biased stretch (basic and acidic residues) spans 231-241; that stretch reads SSHDLLKDDPH. Over residues 257 to 268 the composition is skewed to acidic residues; it reads DLVDDGEDESAE. Basic and acidic residues-rich tracts occupy residues 269–286, 304–347, and 359–371; these read HDEY…ERIA, EVEK…KRSE, and EYRR…EALR. Positions 306 to 377 form a coiled coil; that stretch reads EKKSVSRSEE…EALRKQQSKK (72 aa). A Phosphoserine modification is found at Ser346. The span at 404-418 shows a compositional bias: acidic residues; it reads PENDIPETEVEDDEG. 2 stretches are compositionally biased toward basic and acidic residues: residues 425–437 and 457–472; these read QFED…KDAS and RREE…KERR.

This sequence belongs to the cyclophilin-type PPIase family. As to quaternary structure, part of the activated spliceosome B/catalytic step 1 spliceosome, one of the forms of the spliceosome which has a well-formed active site but still cannot catalyze the branching reaction and is composed at least of 52 proteins, the U2, U5 and U6 snRNAs and the pre-mRNA. Recruited during early steps of activated spliceosome B maturation, it is probably one of the first proteins released from this complex as he matures to the spliceosome C complex. Component of the minor spliceosome, which splices U12-type introns.

It localises to the nucleus. In terms of biological role, as part of the spliceosome, plays a role in pre-mRNA splicing. Probable inactive PPIase with no peptidyl-prolyl cis-trans isomerase activity. As a component of the minor spliceosome, involved in the splicing of U12-type introns in pre-mRNAs. The sequence is that of Spliceosome-associated protein CWC27 homolog from Homo sapiens (Human).